The sequence spans 397 residues: Bifunctional enzyme IspD/IspF (397 aa).

The segment at 1-233 (MCAKKYKIAA…KLLFEEPKFR (233 aa)) is 2-C-methyl-D-erythritol 4-phosphate cytidylyltransferase. Residues 233-397 (RVGAGYDIHK…VLLHTNFYWK (165 aa)) are 2-C-methyl-D-erythritol 2,4-cyclodiphosphate synthase. The a divalent metal cation site is built by Asp239 and His241. Residues 239–241 (DIH) and 270–271 (HS) each bind 4-CDP-2-C-methyl-D-erythritol 2-phosphate. His278 is an a divalent metal cation binding site. Residues 292–294 (DIG), 368–371 (TTAE), Tyr375, and Arg378 contribute to the 4-CDP-2-C-methyl-D-erythritol 2-phosphate site.

The protein in the N-terminal section; belongs to the IspD/TarI cytidylyltransferase family. IspD subfamily. In the C-terminal section; belongs to the IspF family. Requires a divalent metal cation as cofactor.

It carries out the reaction 2-C-methyl-D-erythritol 4-phosphate + CTP + H(+) = 4-CDP-2-C-methyl-D-erythritol + diphosphate. It catalyses the reaction 4-CDP-2-C-methyl-D-erythritol 2-phosphate = 2-C-methyl-D-erythritol 2,4-cyclic diphosphate + CMP. Its pathway is isoprenoid biosynthesis; isopentenyl diphosphate biosynthesis via DXP pathway; isopentenyl diphosphate from 1-deoxy-D-xylulose 5-phosphate: step 2/6. It functions in the pathway isoprenoid biosynthesis; isopentenyl diphosphate biosynthesis via DXP pathway; isopentenyl diphosphate from 1-deoxy-D-xylulose 5-phosphate: step 4/6. Functionally, bifunctional enzyme that catalyzes the formation of 4-diphosphocytidyl-2-C-methyl-D-erythritol from CTP and 2-C-methyl-D-erythritol 4-phosphate (MEP) (IspD), and catalyzes the conversion of 4-diphosphocytidyl-2-C-methyl-D-erythritol 2-phosphate (CDP-ME2P) to 2-C-methyl-D-erythritol 2,4-cyclodiphosphate (ME-CPP) with a corresponding release of cytidine 5-monophosphate (CMP) (IspF). In Wolbachia pipientis wMel, this protein is Bifunctional enzyme IspD/IspF.